Consider the following 41-residue polypeptide: Large ribosomal subunit protein bL36 (41 aa).

Belongs to the bacterial ribosomal protein bL36 family.

This chain is Large ribosomal subunit protein bL36, found in Parvibaculum lavamentivorans (strain DS-1 / DSM 13023 / NCIMB 13966).